The following is a 666-amino-acid chain: Probable potassium transport system protein Kup (666 aa).

A run of 12 helical transmembrane segments spans residues 16–36, 58–78, 100–120, 141–161, 165–185, 221–241, 253–273, 294–314, 343–363, 373–393, 399–419, and 424–444; these read GFII…LYTM, ISLI…LIAL, PWLI…GALT, IYQN…VLFG, FGTG…FSFL, IFIL…YSDL, WPFV…WILA, VYLV…LISG, LYIP…VLAF, YGLA…YYLI, PILA…FFLA, and FMHG…VMFI.

It belongs to the HAK/KUP transporter (TC 2.A.72) family.

It localises to the cell membrane. The enzyme catalyses K(+)(in) + H(+)(in) = K(+)(out) + H(+)(out). Functionally, transport of potassium into the cell. Likely operates as a K(+):H(+) symporter. This chain is Probable potassium transport system protein Kup, found in Streptococcus pyogenes serotype M49 (strain NZ131).